The primary structure comprises 259 residues: Adenosylcobinamide-GDP ribazoletransferase (259 aa).

Transmembrane regions (helical) follow at residues 27 to 47 (ITFL…ILYI), 51 to 71 (FSHL…NGLN), 100 to 120 (VGAG…LSLA), 124 to 144 (LYIG…SMMI), 175 to 195 (FLAI…VIVA), and 219 to 239 (VIGF…IIIA).

This sequence belongs to the CobS family. Requires Mg(2+) as cofactor.

The protein resides in the cell membrane. The catalysed reaction is alpha-ribazole + adenosylcob(III)inamide-GDP = adenosylcob(III)alamin + GMP + H(+). It catalyses the reaction alpha-ribazole 5'-phosphate + adenosylcob(III)inamide-GDP = adenosylcob(III)alamin 5'-phosphate + GMP + H(+). It participates in cofactor biosynthesis; adenosylcobalamin biosynthesis; adenosylcobalamin from cob(II)yrinate a,c-diamide: step 7/7. Functionally, joins adenosylcobinamide-GDP and alpha-ribazole to generate adenosylcobalamin (Ado-cobalamin). Also synthesizes adenosylcobalamin 5'-phosphate from adenosylcobinamide-GDP and alpha-ribazole 5'-phosphate. The protein is Adenosylcobinamide-GDP ribazoletransferase of Thermoplasma volcanium (strain ATCC 51530 / DSM 4299 / JCM 9571 / NBRC 15438 / GSS1).